The following is a 265-amino-acid chain: Transmembrane protein 270 (265 aa).

3 consecutive transmembrane segments (helical) span residues 72–92 (PLGQ…WLVL), 130–150 (LFLS…VVTW), and 185–205 (LYWW…YLIT). Residues 229–265 (QEVEPQEVSGSSLLPSLSASSDSESGTVLPEQETPRE) form a disordered region. The span at 237–253 (SGSSLLPSLSASSDSES) shows a compositional bias: low complexity.

It localises to the membrane. The sequence is that of Transmembrane protein 270 from Homo sapiens (Human).